The sequence spans 188 residues: MSPLQEIGTAVRMTAIFWIGCGLAYPLIFTGFAQVAFPDQANGSLVRNAQNQVIGSSLIGQKFTSERYFHGRPSSIDYKAEASGASQLAPTNKVLIERVKADAAAFEAQNGTKPTIDLVTTPGSGLDPHITPAGAAVQTARVSRARNLAPEQVRKLVSQYTEGRFLGIFGEPRVNVLALNLALDGIRR.

The chain crosses the membrane as a helical span at residues 13 to 33; the sequence is MTAIFWIGCGLAYPLIFTGFA.

It belongs to the KdpC family. In terms of assembly, the system is composed of three essential subunits: KdpA, KdpB and KdpC.

Its subcellular location is the cell inner membrane. Its function is as follows. Part of the high-affinity ATP-driven potassium transport (or Kdp) system, which catalyzes the hydrolysis of ATP coupled with the electrogenic transport of potassium into the cytoplasm. This subunit acts as a catalytic chaperone that increases the ATP-binding affinity of the ATP-hydrolyzing subunit KdpB by the formation of a transient KdpB/KdpC/ATP ternary complex. The protein is Potassium-transporting ATPase KdpC subunit of Gloeobacter violaceus (strain ATCC 29082 / PCC 7421).